Here is a 537-residue protein sequence, read N- to C-terminus: Ceramide kinase (537 aa).

The essential for enzyme activity stretch occupies residues 1–115; the sequence is MGATGAAEPL…CPEEQLCHLW (115 aa). The required for binding to sulfatide and phosphoinositides stretch occupies residues 1–125; sequence MGATGAAEPL…LQTLREMLEK (125 aa). Residues 128 to 278 form the DAGKc domain; it reads SRPKHLLVFI…MDVSSVHHNS (151 aa). Residues 138-140 and 170-174 contribute to the ATP site; these read NPF and TEHAN. Substrate is bound at residue 195 to 198; the sequence is GGDG. Asp-197 (proton donor/acceptor) is an active-site residue. ATP-binding positions include Glu-202, 239–241, Arg-304, and Arg-310; that span reads GST. A phosphoserine mark is found at Ser-340 and Ser-408. Residue 502–504 coordinates ATP; that stretch reads DGE.

The cofactor is Ca(2+). It depends on Mg(2+) as a cofactor. In terms of tissue distribution, high level expression in heart, brain, skeletal muscle, kidney and liver; moderate in peripheral blood leukocytes and thymus; very low in spleen, small intestine, placenta and lung.

The protein resides in the cytoplasm. It localises to the cell membrane. The enzyme catalyses an N-acylsphing-4-enine + ATP = an N-acylsphing-4-enine 1-phosphate + ADP + H(+). The catalysed reaction is N-(hexanoyl)sphing-4-enine + ATP = N-hexanoylsphing-4-enine 1-phosphate + ADP + H(+). It catalyses the reaction N-(acetyl)-sphing-4-enine + ATP = N-(acetyl)-sphing-4-enine-1-phosphate + ADP + H(+). It carries out the reaction N-hexadecanoylsphing-4-enine + ATP = N-(hexadecanoyl)-sphing-4-enine-1-phosphate + ADP + H(+). The enzyme catalyses N-hexanoyl-(4R)-hydroxysphinganine + ATP = N-hexanoyl-(4R)-hydroxysphinganine-1-phosphate + ADP + H(+). With respect to regulation, inhibited by sulfatide. Inhibited by sphinganine, sphingenine, and N,N-Dimethylsphingosine (DMS). Cardiolipin at 0.1 uM significantly increases activity, whereas at concentrations &gt;1 uM has an inhibitory effect. Its function is as follows. Catalyzes specifically the phosphorylation of ceramide to form ceramide 1-phosphate. Acts efficiently on natural and analog ceramides (C6, C8, C16 ceramides, and C8-dihydroceramide), to a lesser extent on C2-ceramide and C6-dihydroceramide, but not on other lipids, such as various sphingosines. Shows a greater preference for D-erythro isomer of ceramides. Binds phosphoinositides. The sequence is that of Ceramide kinase (CERK) from Homo sapiens (Human).